Here is a 300-residue protein sequence, read N- to C-terminus: ATP-dependent (S)-NAD(P)H-hydrate dehydratase (300 aa).

One can recognise a YjeF C-terminal domain in the interval 14–293 (LLTLFKTIVP…NEISAVFRSD (280 aa)). (6S)-NADPHX is bound by residues Gly-114 and 167-173 (NAMEFRR). ATP is bound by residues 198–202 (KGVND) and 219–228 (GSGRRCGGQG). Asp-229 is a (6S)-NADPHX binding site.

This sequence belongs to the NnrD/CARKD family. Requires Mg(2+) as cofactor.

It carries out the reaction (6S)-NADHX + ATP = ADP + phosphate + NADH + H(+). The enzyme catalyses (6S)-NADPHX + ATP = ADP + phosphate + NADPH + H(+). Functionally, catalyzes the dehydration of the S-form of NAD(P)HX at the expense of ATP, which is converted to ADP. Together with NAD(P)HX epimerase, which catalyzes the epimerization of the S- and R-forms, the enzyme allows the repair of both epimers of NAD(P)HX, a damaged form of NAD(P)H that is a result of enzymatic or heat-dependent hydration. The protein is ATP-dependent (S)-NAD(P)H-hydrate dehydratase of Drosophila pseudoobscura pseudoobscura (Fruit fly).